The sequence spans 562 residues: Ikaros family zinc finger protein (562 aa).

3 consecutive C2H2-type zinc fingers follow at residues isoleucine 45 to histidine 67, phenylalanine 73 to histidine 95, and phenylalanine 101 to histidine 123. The C2H2-type 4; degenerate zinc finger occupies tyrosine 129–proline 152. Disordered regions lie at residues asparagine 178–proline 210, glutamine 293–threonine 342, glutamine 361–aspartate 404, and aspartate 451–aspartate 473. Over residues proline 307–serine 326 the composition is skewed to low complexity. Over residues glycine 327–glutamate 336 the composition is skewed to polar residues. Residues aspartate 369 to proline 383 are compositionally biased toward basic and acidic residues. Residues glutamate 456–threonine 471 show a composition bias toward polar residues. 2 C2H2-type zinc fingers span residues tryptophan 494–histidine 516 and leucine 522–histidine 546.

It belongs to the Ikaros C2H2-type zinc-finger protein family. As to expression, expression is strongest in the anterior Fol cells of the oikoplastic epithelium.

The protein localises to the nucleus. In Oikopleura dioica (Tunicate), this protein is Ikaros family zinc finger protein.